The following is a 717-amino-acid chain: PAN2-PAN3 deadenylation complex subunit PAN3 (717 aa).

The C3H1-type zinc finger occupies 8–37 (WARDVPCRNVIIYGFCKKKTEGCPFKHDDD). The interval 37 to 100 (DDIATPTSTP…HTGSKSQVPK (64 aa)) is disordered. Residues 62–90 (PSKISVSSLPSLNSQPSSTAPTSAPNATA) show a composition bias toward low complexity. The span at 91–100 (HTGSKSQVPK) shows a compositional bias: polar residues. The segment at 323–585 (QLFPSGGNLP…ATIIEKYIGL (263 aa)) is pseudokinase domain. ATP-binding positions include Arg-378, 428-435 (DYYPNATS), and 482-483 (DK). Positions 586 to 624 (DVVFKVMEAQQTYSEYAENVLSRELENGRLFRLICKLNF) form a coiled coil. Positions 625–717 (IFGRVENRLD…VDKTFRAMTL (93 aa)) are knob domain.

This sequence belongs to the protein kinase superfamily. PAN3 family. As to quaternary structure, homodimer. Forms a heterotrimer with a catalytic subunit PAN2 to form the poly(A)-nuclease (PAN) deadenylation complex. Interacts (via PAM-2 motif) with poly(A)-binding protein PAB1 (via PABC domain), conferring substrate specificity of the enzyme complex.

The protein resides in the cytoplasm. Its function is as follows. Regulatory subunit of the poly(A)-nuclease (PAN) deadenylation complex, one of two cytoplasmic mRNA deadenylases involved in mRNA turnover. PAN specifically shortens poly(A) tails of RNA and the activity is stimulated by poly(A)-binding protein PAB1. PAN deadenylation is followed by rapid degradation of the shortened mRNA tails by the CCR4-NOT complex. Deadenylated mRNAs are then degraded by two alternative mechanisms, namely exosome-mediated 3'-5' exonucleolytic degradation, or deadenylation-dependent mRNA decaping and subsequent 5'-3' exonucleolytic degradation by XRN1. May also be involved in post-transcriptional maturation of mRNA poly(A) tails. PAN3 acts as a positive regulator for PAN activity, recruiting the catalytic subunit PAN2 to mRNA via its interaction with RNA and with PAB1. This chain is PAN2-PAN3 deadenylation complex subunit PAN3, found in Candida glabrata (strain ATCC 2001 / BCRC 20586 / JCM 3761 / NBRC 0622 / NRRL Y-65 / CBS 138) (Yeast).